A 562-amino-acid polypeptide reads, in one-letter code: Tissue-type plasminogen activator (562 aa).

The N-terminal stretch at 1 to 20 (MNAMKRGLCCVLLLCGAVFA) is a signal peptide. Positions 21 to 32 (LPSQEIHARVRR) are excised as a propeptide. The propeptide at 33–35 (GAR) is removed by plasmin. In terms of domain architecture, Fibronectin type-I spans 39–81 (VICRDEKTQMIYQQHQSWLRPVLRSNRVEYCWCNSGRAQCHSV). 17 disulfide bridges follow: cysteine 41–cysteine 71, cysteine 69–cysteine 78, cysteine 86–cysteine 97, cysteine 91–cysteine 108, cysteine 110–cysteine 119, cysteine 127–cysteine 208, cysteine 148–cysteine 190, cysteine 179–cysteine 203, cysteine 215–cysteine 296, cysteine 236–cysteine 278, cysteine 267–cysteine 291, cysteine 299–cysteine 430, cysteine 342–cysteine 358, cysteine 350–cysteine 419, cysteine 444–cysteine 519, cysteine 476–cysteine 492, and cysteine 509–cysteine 537. Residues 42 to 52 (RDEKTQMIYQQ) form an important for binding to annexin A2 region. An EGF-like domain is found at 82 to 120 (PVRSCSEPRCFNGGTCQQALYFSDFVCQCPEGFAGKCCE). O-linked (Fuc) threonine glycosylation occurs at threonine 96. 2 consecutive Kringle domains span residues 126–208 (TCYE…TPAC) and 214–296 (DCYF…VPSC). A glycan (N-linked (GlcNAc...) asparagine) is linked at asparagine 152. The Peptidase S1 domain occupies 311–561 (IKGGLFADIA…YLDWIHDNMR (251 aa)). Residues histidine 357 and aspartate 406 each act as charge relay system in the active site. The N-linked (GlcNAc...) asparagine glycan is linked to asparagine 483. Catalysis depends on serine 513, which acts as the Charge relay system.

It belongs to the peptidase S1 family. As to quaternary structure, heterodimer of chain A and chain B held by a disulfide bond. Binds to fibrin with high affinity. This interaction leads to an increase in the catalytic efficiency of the enzyme due to an increase in affinity for plasminogen. Similarly, binding to heparin increases the activation of plasminogen. Binds to annexin A2, cytokeratin-8, fibronectin and laminin. Binds to mannose receptor and the low-density lipoprotein receptor-related protein (LRP1); these proteins are involved in TPA clearance. Binds LRP1B; binding is followed by internalization and degradation. Forms heterodimer with SERPINA5. Interacts with SERPINE1. In complex with SERPINE1, interacts with SORL1. Post-translationally, the single chain, almost fully active enzyme, can be further processed into a two-chain fully active form by a cleavage after Arg-310 catalyzed by plasmin, tissue kallikrein or factor Xa.

The protein resides in the secreted. It is found in the extracellular space. The catalysed reaction is Specific cleavage of Arg-|-Val bond in plasminogen to form plasmin.. Its activity is regulated as follows. Inhibited by SERPINA5. Inhibited by SERPINE1. Functionally, converts the abundant, but inactive, zymogen plasminogen to plasmin by hydrolyzing a single Arg-Val bond in plasminogen. By controlling plasmin-mediated proteolysis, it plays an important role in tissue remodeling and degradation, in cell migration and many other physiopathological events. During oocyte activation, plays a role in cortical granule reaction in the zona reaction, which contributes to the block to polyspermy. The chain is Tissue-type plasminogen activator (PLAT) from Pongo abelii (Sumatran orangutan).